The primary structure comprises 921 residues: Retinoblastoma-associated protein (921 aa).

Disordered stretches follow at residues 1–31 (MPPK…PPGG) and 603–634 (RSPK…QKPQ). Positions 612–634 (HPQSGTSNPDAQPSATSQTQKPQ) are enriched in polar residues. The short motif at 853–869 (KRSAEPSDAPKPLKRLR) is the Bipartite nuclear localization signal element. The segment at 873–921 (EGQDEADGGKHLPQESKFQQKLAEMTSTRTRMQKQKLNDGNDTSANEEK) is disordered. The segment covering 910 to 921 (NDGNDTSANEEK) has biased composition (polar residues).

The protein belongs to the retinoblastoma protein (RB) family. In terms of assembly, interacts with and sequesters the E2F1 transcription factor, thereby inhibiting E2F1 transcription. Interacts with SUV39H1, KMT5B and KMT5C. (Microbial infection) Interacts with, and is inhibited by fowl adenovirus 1 protein GAM-1. In terms of processing, phosphorylated in G1, thereby releasing E2F1 which is then able to activate cell growth. Dephosphorylated at the late M phase. Phosphorylation of domain C promotes interaction between the C-terminal domain C and the Pocket domain, and thereby inhibits interactions with heterodimeric E2F/DP transcription factor complexes.

Its subcellular location is the nucleus. It localises to the cytoplasm. Tumor suppressor that is a key regulator of the G1/S transition of the cell cycle. The hypophosphorylated form binds transcription regulators of the E2F family, preventing transcription of E2F-responsive genes. Both physically blocks E2Fs transactivating domain and recruits chromatin-modifying enzymes that actively repress transcription. Cyclin and CDK-dependent phosphorylation of RB1 induces its dissociation from E2Fs, thereby activating transcription of E2F responsive genes and triggering entry into S phase. RB1 also promotes the G0-G1 transition upon phosphorylation and activation by CDK3/cyclin-C. The chain is Retinoblastoma-associated protein (RB1) from Gallus gallus (Chicken).